The sequence spans 263 residues: Undecaprenyl-diphosphatase (263 aa).

7 helical membrane-spanning segments follow: residues 38–58 (RSDF…CLAL), 75–95 (RDYV…GLIV), 108–128 (PVAW…HFAG), 135–155 (VVTW…GVFP), 181–201 (FVFM…LLEM), 217–237 (VAFI…LGYI), and 242–262 (FTVF…WLPA).

This sequence belongs to the UppP family.

Its subcellular location is the cell inner membrane. The enzyme catalyses di-trans,octa-cis-undecaprenyl diphosphate + H2O = di-trans,octa-cis-undecaprenyl phosphate + phosphate + H(+). In terms of biological role, catalyzes the dephosphorylation of undecaprenyl diphosphate (UPP). Confers resistance to bacitracin. The polypeptide is Undecaprenyl-diphosphatase (Xanthomonas campestris pv. campestris (strain 8004)).